Consider the following 726-residue polypeptide: Germacradienol/geosmin synthase (726 aa).

The germacradienol/germacrene D synthase stretch occupies residues 2-354; sequence TQQPFQLPHF…TSAADVGALL (353 aa). Mg(2+) contacts are provided by Asp-86, Glu-91, Asn-267, Thr-271, Gln-276, Asp-455, Asn-598, Ser-602, and Glu-606. The DDXXD motif 1; degenerate signature appears at 86 to 91; that stretch reads DDHFLE. The tract at residues 355 to 726 is geosmin synthase; that stretch reads ADAVAQRARS…VPRSSPALTH (372 aa). The DDXXD motif 2; degenerate signature appears at 455–459; it reads DDYYP.

It belongs to the terpene synthase family. Mg(2+) serves as cofactor.

The enzyme catalyses (2E,6E)-farnesyl diphosphate + H2O = (1E,4S,5E,7R)-germacra-1(10),5-dien-11-ol + diphosphate. The catalysed reaction is (1E,4S,5E,7R)-germacra-1(10),5-dien-11-ol + H2O = (-)-geosmin + acetone. It catalyses the reaction (2E,6E)-farnesyl diphosphate = (-)-germacrene D + diphosphate. It functions in the pathway secondary metabolite biosynthesis; geosmin biosynthesis. The protein operates within sesquiterpene biosynthesis; germacradienol biosynthesis; germacradienol from farnesyl diphosphate: step 1/1. It participates in sesquiterpene biosynthesis; germacrene D biosynthesis; germacrene D from farnesyl diphosphate: step 1/1. Tow-domain protein where the N-terminal domain catalyzes the cyclization of farnesyl diphosphate (FPP) to a 85:15 mixture of the sesquiterpene alcohol germacradienol and the sesquiterpene hydrocarbon germacrene D. The C-terminal domain partially converts the germacradienol formed into geosmin, the characteristic odoriferous ('earthy aroma') constituent of Streptomyces species. In Streptomyces coelicolor (strain ATCC BAA-471 / A3(2) / M145), this protein is Germacradienol/geosmin synthase (cyc2).